We begin with the raw amino-acid sequence, 332 residues long: MSFSERLLAAWYQGHPALALLRPLEALYRRVANGRRADFLSGRKPAYRAPLPVLVVGNITVGGTGKTPMILWMIEHCRARGLRVGVISRGYGARPPTTPWRVRAEQDAAEAGDEPLMIVRRSGVPLMIDPDRPRALQALLAEEQLDLVLCDDGLQHYRLARDLELVLIDAARGLGNGRCLPAGPLREPAERLESVDALLYNGADEDPDGGYAFRLQPTALINLQSGERRPLEHFPAGQEVHALAGIGNPQRFFRTLEALHWRAIPHAFPDHATYTAAELAFSPPLPLLMTEKDAVKCRAFAAADWWYLAVDAVPSPAFVAWFDARLEHLLAR.

Position 60–67 (threonine 60–threonine 67) interacts with ATP.

Belongs to the LpxK family.

It carries out the reaction a lipid A disaccharide + ATP = a lipid IVA + ADP + H(+). Its pathway is glycolipid biosynthesis; lipid IV(A) biosynthesis; lipid IV(A) from (3R)-3-hydroxytetradecanoyl-[acyl-carrier-protein] and UDP-N-acetyl-alpha-D-glucosamine: step 6/6. Its function is as follows. Transfers the gamma-phosphate of ATP to the 4'-position of a tetraacyldisaccharide 1-phosphate intermediate (termed DS-1-P) to form tetraacyldisaccharide 1,4'-bis-phosphate (lipid IVA). This Pseudomonas aeruginosa (strain LESB58) protein is Tetraacyldisaccharide 4'-kinase.